The chain runs to 195 residues: Interferon tau-11 (195 aa).

A signal peptide spans 1 to 23 (MAFVLSLLMALVLVSYGPGGSLG). Cystine bridges form between Cys24-Cys122 and Cys52-Cys162. N-linked (GlcNAc...) asparagine glycosylation is present at Asn101.

Belongs to the alpha/beta interferon family. IFN-alphaII subfamily. Constitutively and exclusively expressed in the mononuclear cells of the extraembryonic trophectoderm.

It is found in the secreted. Its function is as follows. Paracrine hormone primarily responsible for maternal recognition of pregnancy. Interacts with endometrial receptors, probably type I interferon receptors, and blocks estrogen receptor expression, preventing the estrogen-induced increase in oxytocin receptor expression in the endometrium. This results in the suppression of the pulsatile endometrial release of the luteolytic hormone prostaglandin F2-alpha, hindering the regression of the corpus luteum (luteolysis) and therefore a return to ovarian cyclicity. This, and a possible direct effect of IFN-tau on prostaglandin synthesis, leads in turn to continued ovarian progesterone secretion, which stimulates the secretion by the endometrium of the nutrients required for the growth of the conceptus. In summary, displays particularly high antiviral and antiproliferative potency concurrently with particular weak cytotoxicity, high antiluteolytic activity and immunomodulatory properties. In contrast with other IFNs, IFN-tau is not virally inducible. The polypeptide is Interferon tau-11 (IFNT11) (Ovis aries (Sheep)).